The following is a 289-amino-acid chain: Leucine--tRNA ligase subunit beta (289 aa).

The 'KMSKS' region signature appears at 45-49 (KMSKS). Lys-48 provides a ligand contact to ATP.

Belongs to the class-I aminoacyl-tRNA synthetase family. Seems to consist of an alpha chain and a beta chain.

It localises to the cytoplasm. It catalyses the reaction tRNA(Leu) + L-leucine + ATP = L-leucyl-tRNA(Leu) + AMP + diphosphate. The polypeptide is Leucine--tRNA ligase subunit beta (leuS') (Aquifex aeolicus (strain VF5)).